A 203-amino-acid chain; its full sequence is NAD(P)H dehydrogenase (quinone) (203 aa).

The region spanning 7-194 (VLVLYHSSYG…SLARKQGAHV (188 aa)) is the Flavodoxin-like domain. Residues 13-18 (SSYGHI) and 82-84 (TRF) contribute to the FMN site. Tyrosine 15 is an NAD(+) binding site. Position 102 (tryptophan 102) interacts with substrate. Residues 117–122 (STGTGG) and histidine 137 each bind FMN.

The protein belongs to the WrbA family. FMN is required as a cofactor.

It carries out the reaction a quinone + NADH + H(+) = a quinol + NAD(+). It catalyses the reaction a quinone + NADPH + H(+) = a quinol + NADP(+). This Parvibaculum lavamentivorans (strain DS-1 / DSM 13023 / NCIMB 13966) protein is NAD(P)H dehydrogenase (quinone).